The following is a 428-amino-acid chain: Gamma-glutamyl phosphate reductase (428 aa).

Belongs to the gamma-glutamyl phosphate reductase family.

The protein localises to the cytoplasm. The enzyme catalyses L-glutamate 5-semialdehyde + phosphate + NADP(+) = L-glutamyl 5-phosphate + NADPH + H(+). It participates in amino-acid biosynthesis; L-proline biosynthesis; L-glutamate 5-semialdehyde from L-glutamate: step 2/2. Its function is as follows. Catalyzes the NADPH-dependent reduction of L-glutamate 5-phosphate into L-glutamate 5-semialdehyde and phosphate. The product spontaneously undergoes cyclization to form 1-pyrroline-5-carboxylate. The protein is Gamma-glutamyl phosphate reductase of Streptomyces coelicolor (strain ATCC BAA-471 / A3(2) / M145).